The primary structure comprises 294 residues: 4-hydroxy-tetrahydrodipicolinate synthase (294 aa).

Residue Thr-45 participates in pyruvate binding. Tyr-133 (proton donor/acceptor) is an active-site residue. The active-site Schiff-base intermediate with substrate is Lys-161. Residue Ile-203 coordinates pyruvate.

The protein belongs to the DapA family. In terms of assembly, homotetramer; dimer of dimers.

The protein localises to the cytoplasm. It catalyses the reaction L-aspartate 4-semialdehyde + pyruvate = (2S,4S)-4-hydroxy-2,3,4,5-tetrahydrodipicolinate + H2O + H(+). It participates in amino-acid biosynthesis; L-lysine biosynthesis via DAP pathway; (S)-tetrahydrodipicolinate from L-aspartate: step 3/4. Functionally, catalyzes the condensation of (S)-aspartate-beta-semialdehyde [(S)-ASA] and pyruvate to 4-hydroxy-tetrahydrodipicolinate (HTPA). This chain is 4-hydroxy-tetrahydrodipicolinate synthase, found in Shewanella sp. (strain MR-7).